The chain runs to 259 residues: Imidazole glycerol phosphate synthase subunit HisF (259 aa).

Active-site residues include aspartate 11 and aspartate 130.

This sequence belongs to the HisA/HisF family. In terms of assembly, heterodimer of HisH and HisF.

The protein resides in the cytoplasm. It catalyses the reaction 5-[(5-phospho-1-deoxy-D-ribulos-1-ylimino)methylamino]-1-(5-phospho-beta-D-ribosyl)imidazole-4-carboxamide + L-glutamine = D-erythro-1-(imidazol-4-yl)glycerol 3-phosphate + 5-amino-1-(5-phospho-beta-D-ribosyl)imidazole-4-carboxamide + L-glutamate + H(+). It participates in amino-acid biosynthesis; L-histidine biosynthesis; L-histidine from 5-phospho-alpha-D-ribose 1-diphosphate: step 5/9. Its function is as follows. IGPS catalyzes the conversion of PRFAR and glutamine to IGP, AICAR and glutamate. The HisF subunit catalyzes the cyclization activity that produces IGP and AICAR from PRFAR using the ammonia provided by the HisH subunit. This is Imidazole glycerol phosphate synthase subunit HisF from Shewanella amazonensis (strain ATCC BAA-1098 / SB2B).